The chain runs to 107 residues: Lipid-anchored protein YDL012C (107 aa).

Residues Met1–Arg18 show a composition bias toward polar residues. The disordered stretch occupies residues Met1–Asn86. Ser2 carries the N-acetylserine modification. Lys13 participates in a covalent cross-link: Glycyl lysine isopeptide (Lys-Gly) (interchain with G-Cter in ubiquitin). The span at Pro35–Pro81 shows a compositional bias: low complexity.

This sequence belongs to the CYSTM1 family.

It localises to the cell membrane. This chain is Lipid-anchored protein YDL012C, found in Saccharomyces cerevisiae (strain ATCC 204508 / S288c) (Baker's yeast).